The following is a 445-amino-acid chain: Protein kinase C and casein kinase substrate in neurons protein 1 (445 aa).

The region spanning 12–282 is the F-BAR domain; it reads DETTDSFWEV…TIVSASAQED (271 aa). Coiled-coil stretches lie at residues 146 to 167 and 183 to 219; these read AKKLKELETAKKTYHMACKEEK and TTDQQKKLQEKVDKCKNDVQKAKEKYEKSLDELNKCT. The disordered stretch occupies residues 327–390; sequence LTQVTHGAEH…PFEEDSKGVR (64 aa). Polar residues-rich tracts occupy residues 338 to 358 and 368 to 379; these read TPQTGDRGSVSSYEKNQQYSA and TAAQSASETNGG. The 60-residue stretch at 386 to 445 folds into the SH3 domain; that stretch reads SKGVRVRALYDYEGQEQDELTFKAGDELTKLEDEDEQGWCKGRLDSGQLGLYPANYVEPV.

As to quaternary structure, interacts with cobl.

The protein localises to the cytoplasm. The protein resides in the cytosol. It localises to the cell membrane. Its subcellular location is the cell projection. It is found in the synapse. The protein localises to the synaptosome. The protein resides in the cytoplasmic vesicle membrane. It localises to the ruffle membrane. Its subcellular location is the membrane. Its function is as follows. Binds to membranes via its F-BAR domain and mediates membrane tubulation. Plays a role in cellular transport processes by recruiting dynamins to membranes. Plays a role in the reorganization of the actin cytoskeleton and in neuron morphogenesis via its interaction with cobl, and by recruiting cobl to the cell cortex. Plays a role in the regulation of neurite formation, neurite branching and the regulation of neurite length. Required for normal synaptic vesicle endocytosis; this process retrieves previously released neurotransmitters to accommodate multiple cycles of neurotransmission. Required for normal excitatory and inhibitory synaptic transmission. Required for normal embryonic development, including normal development of laterality, normal body size and shape, as well as normal brain and heart development. Required for normal development of stereocilia and kinocilia in sensory hair cells of neuromasts in the posterior lateral line organ, and thus also for balance keeping and normal swimming behavior. This chain is Protein kinase C and casein kinase substrate in neurons protein 1 (pacsin1b), found in Danio rerio (Zebrafish).